The following is a 489-amino-acid chain: Coronin-1B (489 aa).

Residue S2 is modified to Phosphoserine. WD repeat units follow at residues 80 to 120 (GHTG…LTSP), 130 to 170 (GHTK…ELYR), 174 to 213 (LHPDLIYNVSWNRNGSLFCSACKDKSVRIIDPRQGTLVAE), 217 to 260 (AHEG…EPMA), and 265 to 305 (DSSN…PYIH). A disordered region spans residues 414–443 (DSRPAMAPGSSRLGAPASTTAAADATPSGS). Positions 427–443 (GAPASTTAAADATPSGS) are enriched in low complexity. A coiled-coil region spans residues 449–474 (EAGKLEEVMQELRALRALVKEQGERI).

Belongs to the WD repeat coronin family. In terms of assembly, forms homooligomers, but does not form complexes with the other coronins. Interacts with Arp2/3 complex components, including ACTR2, ARPC1B and ARPC2. Binds actin. Post-translationally, phosphorylation on Ser-2 regulates the interaction with the Arp2/3 complex and cell motility in fibroblasts. Phosphorylation does not seem to affect subcellular location.

Its subcellular location is the cytoplasm. It localises to the cytoskeleton. The protein resides in the stress fiber. In terms of biological role, regulates leading edge dynamics and cell motility in fibroblasts. May be involved in cytokinesis and signal transduction. The sequence is that of Coronin-1B (CORO1B) from Pongo abelii (Sumatran orangutan).